An 881-amino-acid chain; its full sequence is Band 4.1-like protein 1 (881 aa).

The residue at position 1 (Met-1) is an N-acetylmethionine. The disordered stretch occupies residues 1–88 (MTTETGPDSE…TPSKAQKSPQ (88 aa)). Residues 17-35 (EAPQQPEAAAAVTTPVTPA) are compositionally biased toward low complexity. At Thr-30 the chain carries Phosphothreonine. Residues 38–50 (GHPEANSNEKHPS) are compositionally biased toward basic and acidic residues. A Phosphoserine modification is found at Ser-75. Residues 76–87 (ERTTPSKAQKSP) show a composition bias toward polar residues. Phosphothreonine is present on Thr-79. Positions 97–378 (AICRVTLLDA…EHHTFFRLVS (282 aa)) constitute an FERM domain. Phosphotyrosine is present on Tyr-343. A phosphoserine mark is found at Ser-378, Ser-430, and Ser-437. The interval 428-501 (SRSLDGAEFS…HKQEFLDKPE (74 aa)) is disordered. The span at 444 to 457 (ENHDAGPDGDKRDE) shows a compositional bias: basic and acidic residues. A phosphoserine mark is found at Ser-461 and Ser-466. The span at 466 to 501 (SEAEEGEVRTPTKIKELKPEQETTPRHKQEFLDKPE) shows a compositional bias: basic and acidic residues. At Thr-475 the chain carries Phosphothreonine. The interval 483–541 (KPEQETTPRHKQEFLDKPEDVLLKHQASINELKRTLKEPNSKLIHRDRDWERERRLPSS) is spectrin--actin-binding. Ser-510 is modified (phosphoserine). Positions 514 to 538 (LKRTLKEPNSKLIHRDRDWERERRL) are enriched in basic and acidic residues. The segment at 514–596 (LKRTLKEPNS…QERDTVFLKD (83 aa)) is disordered. Ser-540, Ser-541, Ser-544, and Ser-546 each carry phosphoserine. Thr-550 carries the phosphothreonine modification. Residues 550–577 (TPEKANERAGLREGSEEKVKPPRPRAPE) are compositionally biased toward basic and acidic residues. 2 positions are modified to phosphoserine: Ser-564 and Ser-578. A Phosphothreonine modification is found at Thr-580. Phosphoserine is present on residues Ser-639, Ser-648, Ser-650, Ser-667, Ser-672, Ser-678, and Ser-685. The interval 642–699 (ELDRDKSDSDTEGLLFSRDLNKGAPSQDDESGGIEDSPDRGACSTPDMPQFEPVKTET) is disordered. Thr-686 is subject to Phosphothreonine. 3 positions are modified to phosphoserine: Ser-722, Ser-784, and Ser-870. Positions 746–881 (SITTETISTT…EERDKKPQES (136 aa)) are C-terminal (CTD).

As to quaternary structure, interacts with AGAP2. As to expression, highest expression in brain, lower in heart, kidney, pancreas, placenta, lung and skeletal muscle.

It is found in the cytoplasm. Its subcellular location is the cytoskeleton. May function to confer stability and plasticity to neuronal membrane via multiple interactions, including the spectrin-actin-based cytoskeleton, integral membrane channels and membrane-associated guanylate kinases. This chain is Band 4.1-like protein 1, found in Homo sapiens (Human).